We begin with the raw amino-acid sequence, 513 residues long: Histidine ammonia-lyase (513 aa).

The segment at residues 142-144 (ASG) is a cross-link (5-imidazolinone (Ala-Gly)). S143 is subject to 2,3-didehydroalanine (Ser).

It belongs to the PAL/histidase family. In terms of processing, contains an active site 4-methylidene-imidazol-5-one (MIO), which is formed autocatalytically by cyclization and dehydration of residues Ala-Ser-Gly.

It localises to the cytoplasm. The enzyme catalyses L-histidine = trans-urocanate + NH4(+). It participates in amino-acid degradation; L-histidine degradation into L-glutamate; N-formimidoyl-L-glutamate from L-histidine: step 1/3. The protein is Histidine ammonia-lyase of Hyphomonas neptunium (strain ATCC 15444).